Here is a 264-residue protein sequence, read N- to C-terminus: 3'-5' ssDNA/RNA exonuclease TatD (264 aa).

The a divalent metal cation site is built by glutamate 92, histidine 128, and histidine 153.

It belongs to the metallo-dependent hydrolases superfamily. TatD-type hydrolase family. TatD subfamily. In terms of assembly, monomer. It depends on Mg(2+) as a cofactor.

The protein localises to the cytoplasm. Its function is as follows. 3'-5' exonuclease that prefers single-stranded DNA and RNA. May play a role in the H(2)O(2)-induced DNA damage repair. The chain is 3'-5' ssDNA/RNA exonuclease TatD from Dickeya dadantii (strain 3937) (Erwinia chrysanthemi (strain 3937)).